The following is an 80-amino-acid chain: Cell division protein ZapB (80 aa).

Residues 3–80 adopt a coiled-coil conformation; sequence FEVFEKLESK…ALLGKMEDVQ (78 aa).

Belongs to the ZapB family. As to quaternary structure, homodimer. The ends of the coiled-coil dimer bind to each other, forming polymers. Interacts with FtsZ.

Its subcellular location is the cytoplasm. Its function is as follows. Non-essential, abundant cell division factor that is required for proper Z-ring formation. It is recruited early to the divisome by direct interaction with FtsZ, stimulating Z-ring assembly and thereby promoting cell division earlier in the cell cycle. Its recruitment to the Z-ring requires functional FtsA or ZipA. This chain is Cell division protein ZapB, found in Proteus mirabilis (strain HI4320).